The following is a 337-amino-acid chain: Inositol 2-dehydrogenase (337 aa).

Belongs to the Gfo/Idh/MocA family. As to quaternary structure, homotetramer.

The catalysed reaction is myo-inositol + NAD(+) = scyllo-inosose + NADH + H(+). Involved in the oxidation of myo-inositol (MI) to 2-keto-myo-inositol (2KMI or 2-inosose). In Klebsiella pneumoniae subsp. pneumoniae (strain ATCC 700721 / MGH 78578), this protein is Inositol 2-dehydrogenase.